The following is a 301-amino-acid chain: Acetyl-coenzyme A carboxylase carboxyl transferase subunit beta (301 aa).

The CoA carboxyltransferase N-terminal domain occupies 25 to 294 (LWIKDPSTGE…NSDAPAPQKP (270 aa)).

Belongs to the AccD/PCCB family. In terms of assembly, acetyl-CoA carboxylase is a heterohexamer composed of biotin carboxyl carrier protein (AccB), biotin carboxylase (AccC) and two subunits each of ACCase subunit alpha (AccA) and ACCase subunit beta (AccD).

It localises to the cytoplasm. The catalysed reaction is N(6)-carboxybiotinyl-L-lysyl-[protein] + acetyl-CoA = N(6)-biotinyl-L-lysyl-[protein] + malonyl-CoA. It participates in lipid metabolism; malonyl-CoA biosynthesis; malonyl-CoA from acetyl-CoA: step 1/1. In terms of biological role, component of the acetyl coenzyme A carboxylase (ACC) complex. Biotin carboxylase (BC) catalyzes the carboxylation of biotin on its carrier protein (BCCP) and then the CO(2) group is transferred by the transcarboxylase to acetyl-CoA to form malonyl-CoA. The polypeptide is Acetyl-coenzyme A carboxylase carboxyl transferase subunit beta (Brucella abortus (strain 2308)).